The chain runs to 430 residues: Pyrroloquinoline quinone-dependent sugar dehydrogenase (430 aa).

Positions 1 to 23 (MARLAPHTLLLALFVFLFGSCTA) are cleaved as a signal peptide. N-linked (GlcNAc...) asparagine glycosylation occurs at N25. R57 is a binding site for pyrroloquinoline quinone. N94 and N147 each carry an N-linked (GlcNAc...) asparagine glycan. H153 serves as a coordination point for pyrroloquinoline quinone. A glycan (N-linked (GlcNAc...) asparagine) is linked at N184. Pyrroloquinoline quinone is bound at residue R220. Ca(2+) contacts are provided by S240 and D242. C281 and C316 are disulfide-bonded. An N-linked (GlcNAc...) asparagine glycan is attached at N306. A pyrroloquinoline quinone-binding site is contributed by H330. N-linked (GlcNAc...) asparagine glycosylation occurs at N341. Residue H350 participates in pyrroloquinoline quinone binding. Cysteines 388 and 392 form a disulfide.

It belongs to the sugar dehydrogenase AA12 family. The cofactor is Ca(2+). Pyrroloquinoline quinone is required as a cofactor.

The protein localises to the secreted. Pyrroloquinoline quinone (PPQ)-dependent oxidoreductase that catalyzes the oxidation of various sugars such as L-fucose. The polypeptide is Pyrroloquinoline quinone-dependent sugar dehydrogenase (Hypocrea jecorina (strain QM6a) (Trichoderma reesei)).